Reading from the N-terminus, the 358-residue chain is Chorismate synthase (358 aa).

R47 contributes to the NADP(+) binding site. FMN is bound by residues 124–126 (RSS), 240–241 (NA), G284, 299–303 (KPVAT), and R325.

Belongs to the chorismate synthase family. In terms of assembly, homotetramer. FMNH2 is required as a cofactor.

It catalyses the reaction 5-O-(1-carboxyvinyl)-3-phosphoshikimate = chorismate + phosphate. The protein operates within metabolic intermediate biosynthesis; chorismate biosynthesis; chorismate from D-erythrose 4-phosphate and phosphoenolpyruvate: step 7/7. Functionally, catalyzes the anti-1,4-elimination of the C-3 phosphate and the C-6 proR hydrogen from 5-enolpyruvylshikimate-3-phosphate (EPSP) to yield chorismate, which is the branch point compound that serves as the starting substrate for the three terminal pathways of aromatic amino acid biosynthesis. This reaction introduces a second double bond into the aromatic ring system. This Phocaeicola vulgatus (strain ATCC 8482 / DSM 1447 / JCM 5826 / CCUG 4940 / NBRC 14291 / NCTC 11154) (Bacteroides vulgatus) protein is Chorismate synthase.